A 309-amino-acid polypeptide reads, in one-letter code: ADP-L-glycero-D-manno-heptose-6-epimerase (309 aa).

Residues 10–11 (LI), 31–32 (DN), Lys38, Lys53, 75–79 (QGACS), and Asn92 each bind NADP(+). The active-site Proton acceptor is Tyr139. An NADP(+)-binding site is contributed by Lys143. A substrate-binding site is contributed by Asn168. Residues Val169 and Lys177 each coordinate NADP(+). Residue Lys177 is the Proton acceptor of the active site. Substrate-binding positions include Ser179, His186, 200-203 (FAGS), Arg208, and Tyr271.

It belongs to the NAD(P)-dependent epimerase/dehydratase family. HldD subfamily. Homopentamer. NADP(+) serves as cofactor.

It carries out the reaction ADP-D-glycero-beta-D-manno-heptose = ADP-L-glycero-beta-D-manno-heptose. The protein operates within nucleotide-sugar biosynthesis; ADP-L-glycero-beta-D-manno-heptose biosynthesis; ADP-L-glycero-beta-D-manno-heptose from D-glycero-beta-D-manno-heptose 7-phosphate: step 4/4. Catalyzes the interconversion between ADP-D-glycero-beta-D-manno-heptose and ADP-L-glycero-beta-D-manno-heptose via an epimerization at carbon 6 of the heptose. This is ADP-L-glycero-D-manno-heptose-6-epimerase from Histophilus somni (strain 2336) (Haemophilus somnus).